Consider the following 390-residue polypeptide: Probable NADH-dependent butanol dehydrogenase 2 (390 aa).

It belongs to the iron-containing alcohol dehydrogenase family.

Its pathway is alcohol metabolism; butanol biosynthesis. This is Probable NADH-dependent butanol dehydrogenase 2 (yugK) from Bacillus subtilis (strain 168).